Consider the following 352-residue polypeptide: Phosphoribosylformylglycinamidine cyclo-ligase (352 aa).

It belongs to the AIR synthase family.

It localises to the cytoplasm. It carries out the reaction 2-formamido-N(1)-(5-O-phospho-beta-D-ribosyl)acetamidine + ATP = 5-amino-1-(5-phospho-beta-D-ribosyl)imidazole + ADP + phosphate + H(+). The protein operates within purine metabolism; IMP biosynthesis via de novo pathway; 5-amino-1-(5-phospho-D-ribosyl)imidazole from N(2)-formyl-N(1)-(5-phospho-D-ribosyl)glycinamide: step 2/2. The chain is Phosphoribosylformylglycinamidine cyclo-ligase from Pseudomonas syringae pv. tomato (strain ATCC BAA-871 / DC3000).